The sequence spans 173 residues: Acetyl-CoA decarbonylase/synthase complex subunit epsilon (173 aa).

Belongs to the CdhB family. As to quaternary structure, heterotetramer of two alpha and two epsilon subunits. The ACDS complex is made up of alpha, epsilon, beta, gamma and delta subunits with a probable stoichiometry of (alpha(2)epsilon(2))(4)-beta(8)-(gamma(1)delta(1))(8).

It functions in the pathway one-carbon metabolism; methanogenesis from acetate. Part of a complex that catalyzes the reversible cleavage of acetyl-CoA, allowing growth on acetate as sole source of carbon and energy. The alpha-epsilon subcomponent functions as a carbon monoxide dehydrogenase. The precise role of the epsilon subunit is unclear; it may have a stabilizing role within the alpha(2)epsilon(2) component and/or be involved in electron transfer to FAD during a potential FAD-mediated CO oxidation. The sequence is that of Acetyl-CoA decarbonylase/synthase complex subunit epsilon from Methanothermobacter thermautotrophicus (strain ATCC 29096 / DSM 1053 / JCM 10044 / NBRC 100330 / Delta H) (Methanobacterium thermoautotrophicum).